Here is a 126-residue protein sequence, read N- to C-terminus: Histone H2B type 1-N (126 aa).

Residues 1 to 12 (MPEPSKSAPAPK) show a composition bias toward low complexity. The disordered stretch occupies residues 1 to 36 (MPEPSKSAPAPKKGSKKAVTKAQKKDGKKRKRSRKE). The residue at position 2 (proline 2) is an N-acetylproline. Glutamate 3 bears the ADP-ribosyl glutamic acid mark. At lysine 6 the chain carries N6-(2-hydroxyisobutyryl)lysine; alternate. Lysine 6 is subject to N6-(beta-hydroxybutyryl)lysine; alternate. The residue at position 6 (lysine 6) is an N6-acetyllysine; alternate. N6-butyryllysine; alternate is present on lysine 6. Lysine 6 carries the N6-crotonyllysine; alternate modification. N6-lactoyllysine; alternate is present on lysine 6. Lysine 6 is covalently cross-linked (Glycyl lysine isopeptide (Lys-Gly) (interchain with G-Cter in SUMO2); alternate). Serine 7 bears the ADP-ribosylserine mark. Lysine 12 is subject to N6-(beta-hydroxybutyryl)lysine; alternate. Lysine 12 and lysine 13 each carry N6-acetyllysine; alternate. 2 positions are modified to N6-crotonyllysine; alternate: lysine 12 and lysine 13. N6-lactoyllysine; alternate is present on lysine 12. Lysine 13 carries the post-translational modification N6-(2-hydroxyisobutyryl)lysine; alternate. At serine 15 the chain carries Phosphoserine; by STK4/MST1. N6-acetyllysine; alternate occurs at positions 16, 17, 21, and 24. N6-crotonyllysine; alternate is present on residues lysine 16, lysine 17, lysine 21, and lysine 24. 4 positions are modified to N6-lactoyllysine; alternate: lysine 16, lysine 17, lysine 21, and lysine 24. 2 positions are modified to N6-(beta-hydroxybutyryl)lysine; alternate: lysine 17 and lysine 21. Lysine 17 carries the post-translational modification N6-glutaryllysine; alternate. 2 positions are modified to N6-(2-hydroxyisobutyryl)lysine; alternate: lysine 21 and lysine 24. N6-butyryllysine; alternate is present on lysine 21. Lysine 21 participates in a covalent cross-link: Glycyl lysine isopeptide (Lys-Gly) (interchain with G-Cter in SUMO2); alternate. Residue lysine 25 is modified to N6-(2-hydroxyisobutyryl)lysine. Lysine 35 is modified (N6-(2-hydroxyisobutyryl)lysine; alternate). Position 35 is an N6-(beta-hydroxybutyryl)lysine; alternate (lysine 35). Position 35 is an N6-crotonyllysine; alternate (lysine 35). Position 35 is an N6-glutaryllysine; alternate (lysine 35). At lysine 35 the chain carries N6-succinyllysine; alternate. Lysine 35 participates in a covalent cross-link: Glycyl lysine isopeptide (Lys-Gly) (interchain with G-Cter in ubiquitin); alternate. Glutamate 36 is modified (polyADP-ribosyl glutamic acid). Residue serine 37 is modified to Phosphoserine; by AMPK. N6-(2-hydroxyisobutyryl)lysine; alternate is present on residues lysine 44, lysine 47, and lysine 58. Lysine 44 bears the N6-lactoyllysine; alternate mark. 2 positions are modified to N6-glutaryllysine; alternate: lysine 44 and lysine 47. Lysine 47 is subject to N6-methyllysine; alternate. Position 58 is an N6,N6-dimethyllysine; alternate (lysine 58). Arginine 80 carries the dimethylated arginine modification. An N6-(2-hydroxyisobutyryl)lysine; alternate modification is found at lysine 86. N6-(beta-hydroxybutyryl)lysine; alternate is present on lysine 86. Residue lysine 86 is modified to N6-acetyllysine; alternate. Residue lysine 86 is modified to N6-lactoyllysine; alternate. At lysine 86 the chain carries N6,N6,N6-trimethyllysine; alternate. Omega-N-methylarginine is present on residues arginine 87 and arginine 93. Lysine 109 carries the N6-(2-hydroxyisobutyryl)lysine; alternate modification. Lysine 109 carries the N6-lactoyllysine; alternate modification. Position 109 is an N6-glutaryllysine; alternate (lysine 109). Lysine 109 is subject to N6-methyllysine; alternate. O-linked (GlcNAc) serine glycosylation occurs at serine 113. Position 116 is a phosphothreonine (threonine 116). Residues lysine 117 and lysine 121 each carry the N6-(2-hydroxyisobutyryl)lysine; alternate modification. Residues lysine 117 and lysine 121 each carry the N6-(beta-hydroxybutyryl)lysine; alternate modification. An N6-lactoyllysine; alternate mark is found at lysine 117 and lysine 121. N6-glutaryllysine; alternate occurs at positions 117 and 121. Residues lysine 117 and lysine 121 each carry the N6-succinyllysine; alternate modification. N6-malonyllysine; alternate is present on lysine 117. The residue at position 117 (lysine 117) is an N6-methylated lysine; alternate. Residue lysine 121 forms a Glycyl lysine isopeptide (Lys-Gly) (interchain with G-Cter in ubiquitin); alternate linkage.

This sequence belongs to the histone H2B family. The nucleosome is a histone octamer containing two molecules each of H2A, H2B, H3 and H4 assembled in one H3-H4 heterotetramer and two H2A-H2B heterodimers. The octamer wraps approximately 147 bp of DNA. Monoubiquitination at Lys-35 (H2BK34Ub) by the MSL1/MSL2 dimer is required for histone H3 'Lys-4' (H3K4me) and 'Lys-79' (H3K79me) methylation and transcription activation at specific gene loci, such as HOXA9 and MEIS1 loci. Similarly, monoubiquitination at Lys-121 (H2BK120Ub) by the RNF20/40 complex gives a specific tag for epigenetic transcriptional activation and is also prerequisite for histone H3 'Lys-4' and 'Lys-79' methylation. It also functions cooperatively with the FACT dimer to stimulate elongation by RNA polymerase II. H2BK120Ub also acts as a regulator of mRNA splicing: deubiquitination by USP49 is required for efficient cotranscriptional splicing of a large set of exons. Post-translationally, phosphorylation at Ser-37 (H2BS36ph) by AMPK in response to stress promotes transcription. Phosphorylated on Ser-15 (H2BS14ph) by STK4/MST1 during apoptosis; which facilitates apoptotic chromatin condensation. Also phosphorylated on Ser-15 in response to DNA double strand breaks (DSBs), and in correlation with somatic hypermutation and immunoglobulin class-switch recombination. In terms of processing, glcNAcylation at Ser-113 promotes monoubiquitination of Lys-121. It fluctuates in response to extracellular glucose, and associates with transcribed genes. ADP-ribosylated by PARP1 or PARP2 on Ser-7 (H2BS6ADPr) in response to DNA damage. H2BS6ADPr promotes recruitment of CHD1L. Mono-ADP-ribosylated on Glu-3 (H2BE2ADPr) by PARP3 in response to single-strand breaks. Poly ADP-ribosylation on Glu-36 (H2BE35ADPr) by PARP1 regulates adipogenesis: it inhibits phosphorylation at Ser-37 (H2BS36ph), thereby blocking expression of pro-adipogenetic genes. Post-translationally, crotonylation (Kcr) is specifically present in male germ cells and marks testis-specific genes in post-meiotic cells, including X-linked genes that escape sex chromosome inactivation in haploid cells. Crotonylation marks active promoters and enhancers and confers resistance to transcriptional repressors. It is also associated with post-meiotically activated genes on autosomes. In terms of processing, lactylated in macrophages by EP300/P300 by using lactoyl-CoA directly derived from endogenous or exogenous lactate, leading to stimulates gene transcription.

The protein resides in the nucleus. Its subcellular location is the chromosome. Its function is as follows. Core component of nucleosome. Nucleosomes wrap and compact DNA into chromatin, limiting DNA accessibility to the cellular machineries which require DNA as a template. Histones thereby play a central role in transcription regulation, DNA repair, DNA replication and chromosomal stability. DNA accessibility is regulated via a complex set of post-translational modifications of histones, also called histone code, and nucleosome remodeling. This chain is Histone H2B type 1-N, found in Homo sapiens (Human).